The following is a 117-amino-acid chain: Large ribosomal subunit protein uL18 (117 aa).

It belongs to the universal ribosomal protein uL18 family. In terms of assembly, part of the 50S ribosomal subunit; part of the 5S rRNA/L5/L18/L25 subcomplex. Contacts the 5S and 23S rRNAs.

Functionally, this is one of the proteins that bind and probably mediate the attachment of the 5S RNA into the large ribosomal subunit, where it forms part of the central protuberance. This is Large ribosomal subunit protein uL18 from Hydrogenovibrio crunogenus (strain DSM 25203 / XCL-2) (Thiomicrospira crunogena).